Here is a 397-residue protein sequence, read N- to C-terminus: MLTPILSSASCSWTPTSQFPHSWHSSPSFLTKPLNLPFTESYKTAKRPTPNYSFKVQAMIEKEVAVSHKPDAFLRESDMGSNVTSNSSSVRGRFEKMRREAQDSVCLAIEKADGGAKFKEDVWSRPGGGGGHSSVLQDGAVFEKAGVNVSVVYGVMPPEAYRAARPTDNGNVKPGPIPFFAAGVSSVLHPKNPFAPTLHFNYRYFETDAPKDAPGAPRQWWFGGGTDFTPAYIFEEDVKHFHSVQKAACDKFDASFYPRFKKWCVDYFYIKHRDERRGLGGIFFDDFNDYDQEMLLSFSTECANSVIPAYIPIVEKRKDTPFTDKHKAWQQLRRGRYVEFNLVYDRGTTFGLKTGGRIESILVSLPLTARWEYDHKPEEGTEEWKLLDACINPKEWI.

Residues 76–95 (ESDMGSNVTSNSSSVRGRFE) form a disordered region. A compositionally biased stretch (polar residues) spans 79–90 (MGSNVTSNSSSV). The interval 135 to 144 (VLQDGAVFEK) is important for dimerization. Serine 185 contacts substrate. The active-site Proton donor is the histidine 199. Residues 201–203 (NYR) and 355–360 (GGRIES) contribute to the substrate site. The segment at 337–372 (YVEFNLVYDRGTTFGLKTGGRIESILVSLPLTARWE) is important for dimerization.

This sequence belongs to the aerobic coproporphyrinogen-III oxidase family. In terms of assembly, homodimer.

The protein localises to the plastid. Its subcellular location is the chloroplast. The enzyme catalyses coproporphyrinogen III + O2 + 2 H(+) = protoporphyrinogen IX + 2 CO2 + 2 H2O. It participates in porphyrin-containing compound metabolism; protoporphyrin-IX biosynthesis; protoporphyrinogen-IX from coproporphyrinogen-III (O2 route): step 1/1. In terms of biological role, involved in the heme and chlorophyll biosynthesis. Catalyzes the aerobic oxidative decarboxylation of propionate groups of rings A and B of coproporphyrinogen-III to yield the vinyl groups in protoporphyrinogen-IX. The sequence is that of Oxygen-dependent coproporphyrinogen-III oxidase, chloroplastic (CPX) from Nicotiana tabacum (Common tobacco).